A 339-amino-acid chain; its full sequence is NADH-quinone oxidoreductase subunit H (339 aa).

The next 9 helical transmembrane spans lie at 10 to 30 (FPLTVIALKVVAITIPLILCV), 50 to 70 (PNVVGPFGLLQPIADAVKLLF), 82 to 102 (ILFILAPIITFVLSLIGWAVI), 115 to 135 (VGVLYILAISSLSVYGIIIAG), 161 to 181 (MGLVIITVLLTTGTLNLSGII), 187 to 207 (LPWWIDLMLLPMSIVFFISVL), 235 to 255 (MGFALFFLGEYANMILVSAMT), 275 to 295 (IPGFFWFVFKVGFLLFCFLWI), and 311 to 331 (GWKVFLPFTLFGVVLVSSVLF).

It belongs to the complex I subunit 1 family. As to quaternary structure, NDH-1 is composed of 14 different subunits. Subunits NuoA, H, J, K, L, M, N constitute the membrane sector of the complex.

The protein localises to the cell inner membrane. The catalysed reaction is a quinone + NADH + 5 H(+)(in) = a quinol + NAD(+) + 4 H(+)(out). NDH-1 shuttles electrons from NADH, via FMN and iron-sulfur (Fe-S) centers, to quinones in the respiratory chain. The immediate electron acceptor for the enzyme in this species is believed to be ubiquinone. Couples the redox reaction to proton translocation (for every two electrons transferred, four hydrogen ions are translocated across the cytoplasmic membrane), and thus conserves the redox energy in a proton gradient. This subunit may bind ubiquinone. This chain is NADH-quinone oxidoreductase subunit H, found in Rickettsia prowazekii (strain Madrid E).